Consider the following 325-residue polypeptide: Odorant receptor 131-2 (325 aa).

The Extracellular portion of the chain corresponds to methionine 1–serine 22. 2 N-linked (GlcNAc...) asparagine glycosylation sites follow: asparagine 2 and asparagine 6. A helical transmembrane segment spans residues leucine 23–phenylalanine 43. Residues leucine 44 to tyrosine 54 lie on the Cytoplasmic side of the membrane. A helical membrane pass occupies residues isoleucine 55–leucine 75. Residues valine 76–isoleucine 91 lie on the Extracellular side of the membrane. A disulfide bond links cysteine 89 and cysteine 170. Residues phenylalanine 92–leucine 112 traverse the membrane as a helical segment. Topologically, residues glutamate 113–asparagine 135 are cytoplasmic. The helical transmembrane segment at glycine 136–phenylalanine 156 threads the bilayer. The Extracellular segment spans residues threonine 157–glutamine 190. The helical transmembrane segment at leucine 191 to alanine 211 threads the bilayer. Residues lysine 212–arginine 227 are Cytoplasmic-facing. The chain crosses the membrane as a helical span at residues threonine 228–isoleucine 248. Over aspartate 249–asparagine 267 the chain is Extracellular. Residues phenylalanine 268–leucine 285 form a helical membrane-spanning segment. At arginine 286 to tyrosine 325 the chain is on the cytoplasmic side.

Belongs to the G-protein coupled receptor 1 family. In terms of assembly, homodimer. Monomer.

Its subcellular location is the cell membrane. The protein resides in the cytoplasm. In terms of biological role, probable olfactory receptor. In Danio rerio (Zebrafish), this protein is Odorant receptor 131-2.